The primary structure comprises 349 residues: Galanin receptor type 1 (349 aa).

Residues 1–36 (MELAVGNLSEGNASWPEPPAPEPGPLFGIGVENFVT) are Extracellular-facing. N7 and N12 each carry an N-linked (GlcNAc...) asparagine glycan. A helical transmembrane segment spans residues 37–57 (LVVFGLIFALGVLGNSLVITV). The Cytoplasmic portion of the chain corresponds to 58–70 (LARSKPGKPRSTT). The helical transmembrane segment at 71 to 91 (NLFILNLSIADLAYLLFCIPF) threads the bilayer. The Extracellular segment spans residues 92 to 109 (QATVYALPTWVLGAFICK). An intrachain disulfide couples C108 to C187. The helical transmembrane segment at 110 to 131 (FIHYFFTVSMLVSIFTLAAMSV) threads the bilayer. Over 132-151 (DRYVAIVHSRRSSSLRVSRN) the chain is Cytoplasmic. The helical transmembrane segment at 152–172 (ALLGVGCIWALSIAMASPVAY) threads the bilayer. Topologically, residues 173-200 (HQGLFHPRASNQTFCWEQWPDPRHKKAY) are extracellular. N183 is a glycosylation site (N-linked (GlcNAc...) asparagine). Residues 201 to 221 (VVCTFVFGYLLPLLLICFCYA) form a helical membrane-spanning segment. At 222–248 (KVLNHLHKKLKNMSKKSEASKKKTAQT) the chain is on the cytoplasmic side. Residues 249 to 269 (VLVVVVVFGISWLPHHIIHLW) form a helical membrane-spanning segment. The Extracellular segment spans residues 270-271 (AE). A helical membrane pass occupies residues 272 to 292 (FGVFPLTPASFLFRITAHCLA). Residues 293-349 (YSNSSVNPIIYAFLSENFRKAYKQVFKCHIRKDSHLSDTKESKSRIDTPPSTNCTHV) lie on the Cytoplasmic side of the membrane. The S-palmitoyl cysteine moiety is linked to residue C320.

It belongs to the G-protein coupled receptor 1 family. As to quaternary structure, interacts with GRP39 AND HTR1A. In terms of processing, palmitoylated on at least one of the three cysteine residues present in the C-terminal part.

Its subcellular location is the cell membrane. Receptor for the hormone galanin. The activity of this receptor is mediated by G proteins that inhibit adenylate cyclase activity. This is Galanin receptor type 1 (GALR1) from Homo sapiens (Human).